The primary structure comprises 206 residues: Small ribosomal subunit protein uS4 (206 aa).

Residues 96–156 enclose the S4 RNA-binding domain; it reads GRLDNVVYRM…EKAKKQSRVK (61 aa).

The protein belongs to the universal ribosomal protein uS4 family. Part of the 30S ribosomal subunit. Contacts protein S5. The interaction surface between S4 and S5 is involved in control of translational fidelity.

Functionally, one of the primary rRNA binding proteins, it binds directly to 16S rRNA where it nucleates assembly of the body of the 30S subunit. In terms of biological role, with S5 and S12 plays an important role in translational accuracy. In Pectobacterium atrosepticum (strain SCRI 1043 / ATCC BAA-672) (Erwinia carotovora subsp. atroseptica), this protein is Small ribosomal subunit protein uS4.